A 316-amino-acid chain; its full sequence is FAD:protein FMN transferase (316 aa).

FAD-binding positions include M14, 88–90, and D146; that span reads AFN. Residue A149 participates in Mg(2+) binding. Positions 152 and 231 each coordinate FAD. 2 residues coordinate Mg(2+): D257 and T261.

The protein belongs to the ApbE family. Mg(2+) is required as a cofactor.

The protein localises to the cytoplasm. The catalysed reaction is L-threonyl-[protein] + FAD = FMN-L-threonyl-[protein] + AMP + H(+). Flavin transferase that catalyzes the transfer of the FMN moiety of FAD and its covalent binding to the hydroxyl group of a threonine residue in a target flavoprotein. Is responsible for the modification of the fumarate reductase KPK_2907. This chain is FAD:protein FMN transferase, found in Klebsiella pneumoniae (strain 342).